We begin with the raw amino-acid sequence, 228 residues long: Ribosomal RNA small subunit methyltransferase G (228 aa).

S-adenosyl-L-methionine-binding positions include glycine 82, leucine 87, aspartate 105–threonine 107, valine 133–glutamate 134, and arginine 147.

This sequence belongs to the methyltransferase superfamily. RNA methyltransferase RsmG family.

It is found in the cytoplasm. Specifically methylates the N7 position of a guanine in 16S rRNA. The polypeptide is Ribosomal RNA small subunit methyltransferase G (Pelodictyon phaeoclathratiforme (strain DSM 5477 / BU-1)).